Here is a 482-residue protein sequence, read N- to C-terminus: tRNA-2-methylthio-N(6)-dimethylallyladenosine synthase (482 aa).

Residues 3–120 (KKLHIKTWGC…LPEMIKQVQG (118 aa)) enclose the MTTase N-terminal domain. Cys-12, Cys-49, Cys-83, Cys-158, Cys-162, and Cys-165 together coordinate [4Fe-4S] cluster. A Radical SAM core domain is found at 144 to 376 (KADGPSAFVS…QNRITQMAQQ (233 aa)). Residues 379-442 (RQMFDTEQRI…PNSLRGDLIR (64 aa)) enclose the TRAM domain.

The protein belongs to the methylthiotransferase family. MiaB subfamily. As to quaternary structure, monomer. Requires [4Fe-4S] cluster as cofactor.

It is found in the cytoplasm. The enzyme catalyses N(6)-dimethylallyladenosine(37) in tRNA + (sulfur carrier)-SH + AH2 + 2 S-adenosyl-L-methionine = 2-methylsulfanyl-N(6)-dimethylallyladenosine(37) in tRNA + (sulfur carrier)-H + 5'-deoxyadenosine + L-methionine + A + S-adenosyl-L-homocysteine + 2 H(+). Its function is as follows. Catalyzes the methylthiolation of N6-(dimethylallyl)adenosine (i(6)A), leading to the formation of 2-methylthio-N6-(dimethylallyl)adenosine (ms(2)i(6)A) at position 37 in tRNAs that read codons beginning with uridine. This is tRNA-2-methylthio-N(6)-dimethylallyladenosine synthase from Pseudoalteromonas translucida (strain TAC 125).